We begin with the raw amino-acid sequence, 247 residues long: ATP synthase subunit a, chloroplastic (247 aa).

5 consecutive transmembrane segments (helical) span residues glutamine 38–valine 58, valine 95–leucine 115, isoleucine 134–threonine 154, leucine 199–leucine 219, and glycine 220–glycine 240.

The protein belongs to the ATPase A chain family. As to quaternary structure, F-type ATPases have 2 components, CF(1) - the catalytic core - and CF(0) - the membrane proton channel. CF(1) has five subunits: alpha(3), beta(3), gamma(1), delta(1), epsilon(1). CF(0) has four main subunits: a, b, b' and c.

The protein localises to the plastid. The protein resides in the chloroplast thylakoid membrane. Key component of the proton channel; it plays a direct role in the translocation of protons across the membrane. The protein is ATP synthase subunit a, chloroplastic of Acorus calamus var. americanus (American sweet flag).